A 510-amino-acid polypeptide reads, in one-letter code: Histidine ammonia-lyase (510 aa).

A cross-link (5-imidazolinone (Ala-Gly)) is located at residues 143-145; that stretch reads ASG. S144 carries the post-translational modification 2,3-didehydroalanine (Ser).

This sequence belongs to the PAL/histidase family. In terms of processing, contains an active site 4-methylidene-imidazol-5-one (MIO), which is formed autocatalytically by cyclization and dehydration of residues Ala-Ser-Gly.

Its subcellular location is the cytoplasm. The catalysed reaction is L-histidine = trans-urocanate + NH4(+). It functions in the pathway amino-acid degradation; L-histidine degradation into L-glutamate; N-formimidoyl-L-glutamate from L-histidine: step 1/3. This Shewanella piezotolerans (strain WP3 / JCM 13877) protein is Histidine ammonia-lyase.